We begin with the raw amino-acid sequence, 415 residues long: Squalene synthase 11 (415 aa).

The next 2 membrane-spanning stretches (helical) occupy residues 281–301 (AIFRFCAIPQIMAIGTLALCF) and 392–412 (LIIILFIILAILYAYLSSNLP).

Belongs to the phytoene/squalene synthase family. It depends on Mg(2+) as a cofactor. The cofactor is Mn(2+).

It is found in the endoplasmic reticulum membrane. The catalysed reaction is 2 (2E,6E)-farnesyl diphosphate + NADH + H(+) = squalene + 2 diphosphate + NAD(+). It carries out the reaction 2 (2E,6E)-farnesyl diphosphate + NADPH + H(+) = squalene + 2 diphosphate + NADP(+). The protein operates within terpene metabolism; lanosterol biosynthesis; lanosterol from farnesyl diphosphate: step 1/3. Functionally, component of the triterpene saponins (e.g. ginsenosides or panaxosides) and phytosterols biosynthetic pathways. Catalyzes the biosynthesis of squalene. This chain is Squalene synthase 11, found in Panax ginseng (Korean ginseng).